The chain runs to 164 residues: CDP-archaeol synthase (164 aa).

The next 4 helical transmembrane spans lie at 3–23 (LTVF…AVFA), 55–75 (AIGI…YHVI), 77–97 (VFDA…GAFI), and 122–142 (FLVY…AVVI).

It belongs to the CDP-archaeol synthase family. The cofactor is Mg(2+).

It is found in the cell membrane. It carries out the reaction 2,3-bis-O-(geranylgeranyl)-sn-glycerol 1-phosphate + CTP + H(+) = CDP-2,3-bis-O-(geranylgeranyl)-sn-glycerol + diphosphate. It participates in membrane lipid metabolism; glycerophospholipid metabolism. Catalyzes the formation of CDP-2,3-bis-(O-geranylgeranyl)-sn-glycerol (CDP-archaeol) from 2,3-bis-(O-geranylgeranyl)-sn-glycerol 1-phosphate (DGGGP) and CTP. This reaction is the third ether-bond-formation step in the biosynthesis of archaeal membrane lipids. The protein is CDP-archaeol synthase of Pyrobaculum aerophilum (strain ATCC 51768 / DSM 7523 / JCM 9630 / CIP 104966 / NBRC 100827 / IM2).